Consider the following 576-residue polypeptide: Nuclear receptor subfamily 1 group D member 2 (576 aa).

Positions 1–60 (MELNAGGVIAYISSSSSASSPASCHSEGSENSFQSSSSSVPSSPNSSNCDANGNPKNADI) are required for phosphorylation by CSNK1E and cytoplasmic localization. The tract at residues 1 to 99 (MELNAGGVIA…HSGMTKFSGM (99 aa)) is modulating. A compositionally biased stretch (low complexity) spans 13-47 (SSSSSASSPASCHSEGSENSFQSSSSSVPSSPNSS). The interval 13–90 (SSSSSASSPA…TSAPGMTKSH (78 aa)) is disordered. Phosphoserine; by GSK3-beta is present on Ser-46. A DNA-binding region (nuclear receptor) is located at residues 100–176 (VLLCKVCGDV…VGMSRDAVRF (77 aa)). 2 consecutive NR C4-type zinc fingers follow at residues 103 to 123 (CKVCGDVASGFHYGVHACEGC) and 140 to 164 (CLKNENCSIMRMNRNRCQQCRFKKC). Residues Lys-162 and Lys-163 each carry the N6-acetyllysine; by KAT5 modification. Disordered regions lie at residues 215–246 (QHDQSALPAQEQLRPKSQLEQENIKNTPSDFA) and 263–282 (LYNQEHRENSSESMPPQRGE). Basic and acidic residues-rich tracts occupy residues 227–237 (LRPKSQLEQEN) and 263–272 (LYNQEHRENS). 2 disulfide bridges follow: Cys-334–Cys-340 and Cys-371–Cys-381. The region spanning 366–576 (RNSYLCNTGG…EELLAFKVHP (211 aa)) is the NR LBD domain. 2 residues coordinate heme: Cys-381 and His-565. The tract at residues 394-576 (SGHEIWEEFS…EELLAFKVHP (183 aa)) is interaction with ZNHIT1.

Belongs to the nuclear hormone receptor family. NR1 subfamily. Binds DNA as a monomer or a homodimer. Interacts with NCOA5 coactivator, leading to a strong increase of transcription of target genes. Interacts (via N-terminus) with KAT5. Interacts (via C-terminus) with HDAC1. Interacts with ZNHIT1. Interacts with SIAH2. In terms of processing, deacetylated by HDAC1. Acetylation and deacetylation regulate its transcriptional regulatory activity. Under more reducing intracellular redox conditions, Cys-381 is in its heme-bound state, which is optimal for recruitment of the NCOR1/HDAC3 corepressor complex and repression of target genes. When subjected to oxidative stress conditions, Cys-381 undergoes oxidation to form a disulfide bridge with Cys-371, also triggering a ligand switch that results in release of bound heme and derepression of target genes. Post-translationally, ubiquitinated by SIAH2; leading to its proteasomal degradation. In terms of processing, phosphorylated by CSNK1E; phosphorylation enhances its cytoplasmic localization. As to expression, ubiquitous. Expressed abundantly in skeletal muscle and brown adipose tissue. Expressed during skeletal muscle myogenesis.

The protein resides in the nucleus. It is found in the cytoplasm. With respect to regulation, the heme-bound form can bind gaseous signaling molecules such as CO and nitric oxide (NO) and NO can reverse its transcriptional repressor activity. Transcriptional repressor which coordinates circadian rhythm and metabolic pathways in a heme-dependent manner. Integral component of the complex transcription machinery that governs circadian rhythmicity and forms a critical negative limb of the circadian clock by directly repressing the expression of core clock components BMAL1 and CLOCK. Also regulates genes involved in metabolic functions, including lipid metabolism and the inflammatory response. Acts as a receptor for heme which stimulates its interaction with the NCOR1/HDAC3 corepressor complex, enhancing transcriptional repression. Recognizes two classes of DNA response elements within the promoter of its target genes and can bind to DNA as either monomers or homodimers, depending on the nature of the response element. Binds as a monomer to a response element composed of the consensus half-site motif 5'-[A/G]GGTCA-3' preceded by an A/T-rich 5' sequence (RevRE), or as a homodimer to a direct repeat of the core motif spaced by two nuclegotides (RevDR-2). Acts as a potent competitive repressor of ROR alpha (RORA) function and also negatively regulates the expression of NR1D1. Regulates lipid and energy homeostasis in the skeletal muscle via repression of genes involved in lipid metabolism and myogenesis including: CD36, FABP3, FABP4, UCP3, SCD1 and MSTN. Regulates hepatic lipid metabolism via the repression of APOC3. Represses gene expression at a distance in macrophages by inhibiting the transcription of enhancer-derived RNAs (eRNAs). In addition to its activity as a repressor, can also act as a transcriptional activator. Acts as a transcriptional activator of the sterol regulatory element-binding protein 1 (SREBF1) and the inflammatory mediator interleukin-6 (IL6) in the skeletal muscle. Plays a role in the regulation of circadian sleep/wake cycle; essential for maintaining wakefulness during the dark phase or active period. Key regulator of skeletal muscle mitochondrial function; negatively regulates the skeletal muscle expression of core clock genes and genes involved in mitochondrial biogenesis, fatty acid beta-oxidation and lipid metabolism. May play a role in the circadian control of neutrophilic inflammation in the lung. The sequence is that of Nuclear receptor subfamily 1 group D member 2 from Mus musculus (Mouse).